The chain runs to 305 residues: Acetyl-coenzyme A carboxylase carboxyl transferase subunit alpha (305 aa).

In terms of domain architecture, CoA carboxyltransferase C-terminal spans 33–280 (AKLESSTALS…KEQILKDLAD (248 aa)).

This sequence belongs to the AccA family. Acetyl-CoA carboxylase is a heterohexamer composed of biotin carboxyl carrier protein (AccB), biotin carboxylase (AccC) and two subunits each of ACCase subunit alpha (AccA) and ACCase subunit beta (AccD).

It is found in the cytoplasm. The enzyme catalyses N(6)-carboxybiotinyl-L-lysyl-[protein] + acetyl-CoA = N(6)-biotinyl-L-lysyl-[protein] + malonyl-CoA. The protein operates within lipid metabolism; malonyl-CoA biosynthesis; malonyl-CoA from acetyl-CoA: step 1/1. Component of the acetyl coenzyme A carboxylase (ACC) complex. First, biotin carboxylase catalyzes the carboxylation of biotin on its carrier protein (BCCP) and then the CO(2) group is transferred by the carboxyltransferase to acetyl-CoA to form malonyl-CoA. The sequence is that of Acetyl-coenzyme A carboxylase carboxyl transferase subunit alpha from Treponema denticola (strain ATCC 35405 / DSM 14222 / CIP 103919 / JCM 8153 / KCTC 15104).